The chain runs to 238 residues: Complement C1q-like protein 4 (238 aa).

An N-terminal signal peptide occupies residues 1 to 15 (MVLLLLVAIPLLVHS). The segment at 37-102 (SRGQGPDGAP…PGPGPGGAAP (66 aa)) is disordered. Residues 53–96 (PPGAKGEVGRRGKAGLRGPPGPPGPRGPPGEPGRPGPPGPPGPG) enclose the Collagen-like domain. Residues 71 to 96 (PPGPPGPRGPPGEPGRPGPPGPPGPG) are compositionally biased toward pro residues. One can recognise a C1q domain in the interval 105–238 (GYVPRIAFYA…TFSGFIIYPD (134 aa)).

In terms of assembly, forms homooligomers, predominantly dimers or trimers. Forms heterooligomers with C1QL1, C1QL2 and C1QL3, when proteins are coexpressed; this interaction does not occur after secretion. Interacts with ADGRB3. In terms of tissue distribution, highly expressed in testis and adipose tissue, brown adipose tissue expressing higher levels than subcutaneous and visceral white adipose tissue. In gonadal fat pad, expressed at lower levels in adipocytes than in the stromal vascular fraction (VSP), which contains preadipocytes, fibroblasts, endothelial cells and occasional immune cells. Expression exhibits sexually dimorphism, with higher levels in females than in males.

It is found in the secreted. May regulate the number of excitatory synapses that are formed on hippocampus neurons. Has no effect on inhibitory synapses. May inhibit adipocyte differentiation at an early stage of the process. The chain is Complement C1q-like protein 4 (C1ql4) from Mus musculus (Mouse).